The following is a 148-amino-acid chain: MTFSVIKKVIEIKKDIPFSDEVELSWFDMQKPNLTAVTKKGVNLVVKAKFTHLHENDILVCEDGIGIKVKRSEDEIFSLEFSDALTFAKTAYEIGNRHQPLQIEEFKIIVLDDISIADIIKDCYANESIKVEKTKAYFKPNGKAHHSH.

The protein belongs to the UreE family.

Its subcellular location is the cytoplasm. Involved in urease metallocenter assembly. Binds nickel. Probably functions as a nickel donor during metallocenter assembly. In Aliarcobacter butzleri (strain RM4018) (Arcobacter butzleri), this protein is Urease accessory protein UreE.